The following is a 305-amino-acid chain: Mas-related G-protein coupled receptor member A7 (305 aa).

The Extracellular segment spans residues 1–17 (MDETSPRSIDIESLIPN). Residues 18–38 (LMIIIFGLVGLTGNAIVLWLL) form a helical membrane-spanning segment. Over 39-46 (GFCLHRNA) the chain is Cytoplasmic. The chain crosses the membrane as a helical span at residues 47-67 (FLVYILNLALADFLFLLCHFI). Over 68–81 (NSAMFLLKVPIPNG) the chain is Extracellular. Residues 82–102 (IFVYCFYTIKMVLYITGLSML) form a helical membrane-spanning segment. The Cytoplasmic portion of the chain corresponds to 103–129 (SAISTERCLSVLCPIWYHCRRPEHTST). A helical membrane pass occupies residues 130-150 (VMCAVIWIFSVLICILKEYFC). Residues 151-167 (DFFGTKLGNYYVCQASN) are Extracellular-facing. A helical transmembrane segment spans residues 168–188 (FFMGAYLMFLFVVLCLSTLAL). The Cytoplasmic portion of the chain corresponds to 189–211 (LARLFCGAEKMKFTRLFVTIMLT). The chain crosses the membrane as a helical span at residues 212–232 (ILVFLLCGLPWGFFWFLLIWI). Over 233–244 (KGGFSVLDYRLY) the chain is Extracellular. A helical transmembrane segment spans residues 245-265 (LASIVLTVVNSCANPIIYFFV). The Cytoplasmic portion of the chain corresponds to 266-305 (GSFRHRLKHQTLKMVLQSALQDTPETHENMVEMSRIKAEQ).

The protein belongs to the G-protein coupled receptor 1 family. Mas subfamily. As to expression, expressed in a subset of sensory neurons that includes nociceptors. Expressed in the subclass of non-peptidergic sensory neurons that are IB4(+) and VR1(-).

It is found in the cell membrane. Functionally, orphan receptor. May be a receptor for RFamide-family neuropeptides such as NPFF and NPAF, which are analgesic in vivo. May regulate nociceptor function and/or development, including the sensation or modulation of pain. The sequence is that of Mas-related G-protein coupled receptor member A7 (Mrgpra7) from Mus musculus (Mouse).